A 72-amino-acid chain; its full sequence is Translation initiation factor IF-1 (72 aa).

One can recognise an S1-like domain in the interval 1 to 72; it reads MAKEEAIEIE…TKGRITYRYK (72 aa).

This sequence belongs to the IF-1 family. Component of the 30S ribosomal translation pre-initiation complex which assembles on the 30S ribosome in the order IF-2 and IF-3, IF-1 and N-formylmethionyl-tRNA(fMet); mRNA recruitment can occur at any time during PIC assembly.

It is found in the cytoplasm. Functionally, one of the essential components for the initiation of protein synthesis. Stabilizes the binding of IF-2 and IF-3 on the 30S subunit to which N-formylmethionyl-tRNA(fMet) subsequently binds. Helps modulate mRNA selection, yielding the 30S pre-initiation complex (PIC). Upon addition of the 50S ribosomal subunit IF-1, IF-2 and IF-3 are released leaving the mature 70S translation initiation complex. The polypeptide is Translation initiation factor IF-1 (Chlorobium phaeobacteroides (strain DSM 266 / SMG 266 / 2430)).